A 231-amino-acid chain; its full sequence is Small ribosomal subunit protein uS2c (231 aa).

Belongs to the universal ribosomal protein uS2 family.

The protein resides in the plastid. It localises to the chloroplast. The protein is Small ribosomal subunit protein uS2c (rps2) of Gracilaria tenuistipitata var. liui (Red alga).